The sequence spans 333 residues: Probable 4-hydroxyproline 2-epimerase (333 aa).

The active-site Proton acceptor is the Cys-90. Substrate-binding positions include 91–92, His-223, and Asp-249; that span reads GH. The Proton donor role is filled by Cys-253. Position 254-255 (254-255) interacts with substrate; it reads GT.

Belongs to the proline racemase family.

It carries out the reaction trans-4-hydroxy-L-proline = cis-4-hydroxy-D-proline. In terms of biological role, likely catalyzes the epimerization of trans-4-hydroxy-L-proline (t4LHyp) to cis-4-hydroxy-D-proline (c4DHyp). May be involved in the degradation pathway that converts t4LHyp to alpha-ketoglutarate, which would allow R.meliloti to grow on t4LHyp as a sole carbon source. The sequence is that of Probable 4-hydroxyproline 2-epimerase from Rhizobium meliloti (strain 1021) (Ensifer meliloti).